The chain runs to 252 residues: 3-dehydroquinate dehydratase (252 aa).

Residues E46–R48 and R82 contribute to the 3-dehydroquinate site. H143 serves as the catalytic Proton donor/acceptor. The active-site Schiff-base intermediate with substrate is K170. The 3-dehydroquinate site is built by R212, S231, and Q235.

The protein belongs to the type-I 3-dehydroquinase family. As to quaternary structure, homodimer.

The catalysed reaction is 3-dehydroquinate = 3-dehydroshikimate + H2O. It participates in metabolic intermediate biosynthesis; chorismate biosynthesis; chorismate from D-erythrose 4-phosphate and phosphoenolpyruvate: step 3/7. In terms of biological role, involved in the third step of the chorismate pathway, which leads to the biosynthesis of aromatic amino acids. Catalyzes the cis-dehydration of 3-dehydroquinate (DHQ) and introduces the first double bond of the aromatic ring to yield 3-dehydroshikimate. In Listeria monocytogenes serovar 1/2a (strain ATCC BAA-679 / EGD-e), this protein is 3-dehydroquinate dehydratase.